Reading from the N-terminus, the 214-residue chain is Outer membrane lipoprotein MapA (214 aa).

A signal peptide spans 1–17 (MFKKFLIFIVPILFLSA). C18 carries the N-palmitoyl cysteine lipid modification. Residue C18 is the site of S-diacylglycerol cysteine attachment.

It is found in the cell outer membrane. The polypeptide is Outer membrane lipoprotein MapA (mapA) (Campylobacter jejuni subsp. jejuni serotype O:6 (strain 81116 / NCTC 11828)).